The sequence spans 116 residues: Large ribosomal subunit protein uL24 (116 aa).

The segment at 1–27 (MAGRKSSTPTRHKMHVKTGDTVQVISG) is disordered.

It belongs to the universal ribosomal protein uL24 family. Part of the 50S ribosomal subunit.

One of two assembly initiator proteins, it binds directly to the 5'-end of the 23S rRNA, where it nucleates assembly of the 50S subunit. Its function is as follows. One of the proteins that surrounds the polypeptide exit tunnel on the outside of the subunit. The polypeptide is Large ribosomal subunit protein uL24 (Picosynechococcus sp. (strain ATCC 27264 / PCC 7002 / PR-6) (Agmenellum quadruplicatum)).